The sequence spans 466 residues: UDP-N-acetylmuramoylalanine--D-glutamate ligase (466 aa).

139 to 145 (GTAGKGG) is a binding site for ATP.

It belongs to the MurCDEF family.

Its subcellular location is the cytoplasm. The enzyme catalyses UDP-N-acetyl-alpha-D-muramoyl-L-alanine + D-glutamate + ATP = UDP-N-acetyl-alpha-D-muramoyl-L-alanyl-D-glutamate + ADP + phosphate + H(+). It functions in the pathway cell wall biogenesis; peptidoglycan biosynthesis. Its function is as follows. Cell wall formation. Catalyzes the addition of glutamate to the nucleotide precursor UDP-N-acetylmuramoyl-L-alanine (UMA). The sequence is that of UDP-N-acetylmuramoylalanine--D-glutamate ligase from Deinococcus geothermalis (strain DSM 11300 / CIP 105573 / AG-3a).